The following is a 100-amino-acid chain: Protein Tat (100 aa).

Residues 1–20 (MEPVNPSLEPWKHPGSQPKT) form a disordered region. An interaction with human CREBBP region spans residues 1-24 (MEPVNPSLEPWKHPGSQPKTACTN). Residues 1 to 48 (MEPVNPSLEPWKHPGSQPKTACTNCYCKKCCFHCQACFITKGLGISYG) are transactivation. The Zn(2+) site is built by Cys-22, Cys-25, and Cys-27. Positions 22-37 (CTNCYCKKCCFHCQAC) are cysteine-rich. Position 28 is an N6-acetyllysine; by host PCAF (Lys-28). Cys-30, His-33, Cys-34, and Cys-37 together coordinate Zn(2+). Residues 38–48 (FITKGLGISYG) form a core region. Positions 47 to 100 (YGRKKRRQRRRPPQDSQTHQVSLSKPSSQPRGDPTGPKEQKKKVERETETDPVH) are disordered. Over residues 48 to 57 (GRKKRRQRRR) the composition is skewed to basic residues. The Nuclear localization signal, RNA-binding (TAR), and protein transduction signature appears at 49–57 (RKKRRQRRR). The tract at residues 49–85 (RKKRRQRRRPPQDSQTHQVSLSKPSSQPRGDPTGPKE) is interaction with the host capping enzyme RNGTT. Lys-50 and Lys-51 each carry N6-acetyllysine; by host EP300 and GCN5L2. Residues Arg-52 and Arg-53 each carry the asymmetric dimethylarginine; by host PRMT6 modification. Residues 61 to 76 (DSQTHQVSLSKPSSQP) show a composition bias toward polar residues. Residue Lys-71 forms a Glycyl lysine isopeptide (Lys-Gly) (interchain with G-Cter in ubiquitin) linkage. Positions 77-79 (RGD) match the Cell attachment site motif. Basic and acidic residues predominate over residues 82–100 (GPKEQKKKVERETETDPVH).

The protein belongs to the lentiviruses Tat family. As to quaternary structure, interacts with host CCNT1. Associates with the P-TEFb complex composed at least of Tat, P-TEFb (CDK9 and CCNT1), TAR RNA, RNA Pol II. Recruits the HATs CREBBP, TAF1/TFIID, EP300, PCAF and GCN5L2. Interacts with host KAT5/Tip60; this interaction targets the latter to degradation. Interacts with the host deacetylase SIRT1. Interacts with host capping enzyme RNGTT; this interaction stimulates RNGTT. Binds to host KDR, and to the host integrins ITGAV/ITGB3 and ITGA5/ITGB1. Interacts with host KPNB1/importin beta-1 without previous binding to KPNA1/importin alpha-1. Interacts with EIF2AK2. Interacts with host nucleosome assembly protein NAP1L1; this interaction may be required for the transport of Tat within the nucleus, since the two proteins interact at the nuclear rim. Interacts with host C1QBP/SF2P32; this interaction involves lysine-acetylated Tat. Interacts with the host chemokine receptors CCR2, CCR3 and CXCR4. Interacts with host DPP4/CD26; this interaction may trigger an anti-proliferative effect. Interacts with host LDLR. Interacts with the host extracellular matrix metalloproteinase MMP1. Interacts with host PRMT6; this interaction mediates Tat's methylation. Interacts with, and is ubiquitinated by MDM2/Hdm2. Interacts with host PSMC3 and HTATIP2. Interacts with STAB1; this interaction may overcome SATB1-mediated repression of IL2 and IL2RA (interleukin) in T cells by binding to the same domain than HDAC1. Interacts (when acetylated) with human CDK13, thereby increasing HIV-1 mRNA splicing and promoting the production of the doubly spliced HIV-1 protein Nef. Interacts with host TBP; this interaction modulates the activity of transcriptional pre-initiation complex. Interacts with host RELA. Interacts with host PLSCR1; this interaction negatively regulates Tat transactivation activity by altering its subcellular distribution. Asymmetrical arginine methylation by host PRMT6 seems to diminish the transactivation capacity of Tat and affects the interaction with host CCNT1. In terms of processing, acetylation by EP300, CREBBP, GCN5L2/GCN5 and PCAF regulates the transactivation activity of Tat. EP300-mediated acetylation of Lys-50 promotes dissociation of Tat from the TAR RNA through the competitive binding to PCAF's bromodomain. In addition, the non-acetylated Tat's N-terminus can also interact with PCAF. PCAF-mediated acetylation of Lys-28 enhances Tat's binding to CCNT1. Lys-50 is deacetylated by SIRT1. Post-translationally, polyubiquitination by host MDM2 does not target Tat to degradation, but activates its transactivation function and fosters interaction with CCNT1 and TAR RNA. Phosphorylated by EIF2AK2 on serine and threonine residues adjacent to the basic region important for TAR RNA binding and function. Phosphorylation of Tat by EIF2AK2 is dependent on the prior activation of EIF2AK2 by dsRNA.

Its subcellular location is the host nucleus. It is found in the host nucleolus. The protein resides in the host cytoplasm. It localises to the secreted. Its function is as follows. Transcriptional activator that increases RNA Pol II processivity, thereby increasing the level of full-length viral transcripts. Recognizes a hairpin structure at the 5'-LTR of the nascent viral mRNAs referred to as the transactivation responsive RNA element (TAR) and recruits the cyclin T1-CDK9 complex (P-TEFb complex) that will in turn hyperphosphorylate the RNA polymerase II to allow efficient elongation. The CDK9 component of P-TEFb and other Tat-activated kinases hyperphosphorylate the C-terminus of RNA Pol II that becomes stabilized and much more processive. Other factors such as HTATSF1/Tat-SF1, SUPT5H/SPT5, and HTATIP2 are also important for Tat's function. Besides its effect on RNA Pol II processivity, Tat induces chromatin remodeling of proviral genes by recruiting the histone acetyltransferases (HATs) CREBBP, EP300 and PCAF to the chromatin. This also contributes to the increase in proviral transcription rate, especially when the provirus integrates in transcriptionally silent region of the host genome. To ensure maximal activation of the LTR, Tat mediates nuclear translocation of NF-kappa-B by interacting with host RELA. Through its interaction with host TBP, Tat may also modulate transcription initiation. Tat can reactivate a latently infected cell by penetrating in it and transactivating its LTR promoter. In the cytoplasm, Tat is thought to act as a translational activator of HIV-1 mRNAs. Extracellular circulating Tat can be endocytosed by surrounding uninfected cells via the binding to several surface receptors such as CD26, CXCR4, heparan sulfate proteoglycans (HSPG) or LDLR. Neurons are rarely infected, but they internalize Tat via their LDLR. Through its interaction with nuclear HATs, Tat is potentially able to control the acetylation-dependent cellular gene expression. Modulates the expression of many cellular genes involved in cell survival, proliferation or in coding for cytokines or cytokine receptors. Tat plays a role in T-cell and neurons apoptosis. Tat induced neurotoxicity and apoptosis probably contribute to neuroAIDS. Circulating Tat also acts as a chemokine-like and/or growth factor-like molecule that binds to specific receptors on the surface of the cells, affecting many cellular pathways. In the vascular system, Tat binds to ITGAV/ITGB3 and ITGA5/ITGB1 integrins dimers at the surface of endothelial cells and competes with bFGF for heparin-binding sites, leading to an excess of soluble bFGF. This chain is Protein Tat, found in Homo sapiens (Human).